The following is a 594-amino-acid chain: Amino-acid permease 1 (594 aa).

Helical transmembrane passes span 75–95 (QMIA…GKSL), 101–121 (GSLM…ILSL), 146–166 (IGFA…PSEI), 181–201 (LNPA…NAFG), 210–230 (FVSS…AIII), 297–317 (VFYR…LVVP), 323–343 (LGNV…VLPH), 344–364 (ITNA…VFAA), 390–410 (PVIS…NAAP), 416–436 (FDWL…LSFI), 468–488 (YGVL…IFPV), and 498–518 (FFVS…SPIF). Residues 550-587 (TSELSEKDLTKPNLQSNDNKNSEDLESNTPPQKKSALQ) are disordered.

This sequence belongs to the amino acid-polyamine-organocation (APC) superfamily.

It localises to the membrane. The sequence is that of Amino-acid permease 1 (aap1) from Schizosaccharomyces pombe (strain 972 / ATCC 24843) (Fission yeast).